Reading from the N-terminus, the 72-residue chain is Translation initiation factor IF-1 (72 aa).

Residues 1-72 enclose the S1-like domain; sequence MAKEDNIEMQ…SKGRIVFRSR (72 aa).

This sequence belongs to the IF-1 family. Component of the 30S ribosomal translation pre-initiation complex which assembles on the 30S ribosome in the order IF-2 and IF-3, IF-1 and N-formylmethionyl-tRNA(fMet); mRNA recruitment can occur at any time during PIC assembly.

It localises to the cytoplasm. Functionally, one of the essential components for the initiation of protein synthesis. Stabilizes the binding of IF-2 and IF-3 on the 30S subunit to which N-formylmethionyl-tRNA(fMet) subsequently binds. Helps modulate mRNA selection, yielding the 30S pre-initiation complex (PIC). Upon addition of the 50S ribosomal subunit IF-1, IF-2 and IF-3 are released leaving the mature 70S translation initiation complex. The protein is Translation initiation factor IF-1 of Shewanella loihica (strain ATCC BAA-1088 / PV-4).